Here is a 197-residue protein sequence, read N- to C-terminus: Imidazoleglycerol-phosphate dehydratase (197 aa).

This sequence belongs to the imidazoleglycerol-phosphate dehydratase family.

It localises to the cytoplasm. It catalyses the reaction D-erythro-1-(imidazol-4-yl)glycerol 3-phosphate = 3-(imidazol-4-yl)-2-oxopropyl phosphate + H2O. Its pathway is amino-acid biosynthesis; L-histidine biosynthesis; L-histidine from 5-phospho-alpha-D-ribose 1-diphosphate: step 6/9. This Xanthobacter autotrophicus (strain ATCC BAA-1158 / Py2) protein is Imidazoleglycerol-phosphate dehydratase.